Consider the following 121-residue polypeptide: General odorant-binding protein 72 (121 aa).

Disulfide bonds link Cys45–Cys101 and Cys90–Cys110.

The protein belongs to the PBP/GOBP family.

The protein resides in the secreted. In terms of biological role, present in the aqueous fluid surrounding olfactory sensory dendrites and are thought to aid in the capture and transport of hydrophobic odorants into and through this fluid. This chain is General odorant-binding protein 72 (Obp72), found in Anopheles gambiae (African malaria mosquito).